Consider the following 321-residue polypeptide: Probable pectate lyase A (321 aa).

The first 18 residues, Met-1–Ala-18, serve as a signal peptide directing secretion. Asn-93 carries an N-linked (GlcNAc...) asparagine glycan. Ca(2+)-binding residues include Asp-134, Asp-163, and Asp-167. Arg-220 is an active-site residue. Residue Asn-238 is glycosylated (N-linked (GlcNAc...) asparagine).

It belongs to the polysaccharide lyase 1 family. It depends on Ca(2+) as a cofactor.

Its subcellular location is the secreted. The catalysed reaction is Eliminative cleavage of (1-&gt;4)-alpha-D-galacturonan to give oligosaccharides with 4-deoxy-alpha-D-galact-4-enuronosyl groups at their non-reducing ends.. Its function is as follows. Pectinolytic enzyme consist of four classes of enzymes: pectin lyase, polygalacturonase, pectin methylesterase and rhamnogalacturonase. Among pectinolytic enzymes, pectin lyase is the most important in depolymerization of pectin, since it cleaves internal glycosidic bonds of highly methylated pectins. Favors pectate, the anion, over pectin, the methyl ester. The polypeptide is Probable pectate lyase A (plyA) (Aspergillus fumigatus (strain ATCC MYA-4609 / CBS 101355 / FGSC A1100 / Af293) (Neosartorya fumigata)).